We begin with the raw amino-acid sequence, 214 residues long: Probable nicotinate-nucleotide adenylyltransferase (214 aa).

This sequence belongs to the NadD family.

The catalysed reaction is nicotinate beta-D-ribonucleotide + ATP + H(+) = deamido-NAD(+) + diphosphate. Its pathway is cofactor biosynthesis; NAD(+) biosynthesis; deamido-NAD(+) from nicotinate D-ribonucleotide: step 1/1. Catalyzes the reversible adenylation of nicotinate mononucleotide (NaMN) to nicotinic acid adenine dinucleotide (NaAD). This is Probable nicotinate-nucleotide adenylyltransferase from Buchnera aphidicola subsp. Acyrthosiphon pisum (strain Tuc7).